A 296-amino-acid polypeptide reads, in one-letter code: 4-hydroxy-tetrahydrodipicolinate synthase (296 aa).

Thr49 contacts pyruvate. Tyr137 acts as the Proton donor/acceptor in catalysis. Residue Lys166 is the Schiff-base intermediate with substrate of the active site. Ile208 provides a ligand contact to pyruvate.

It belongs to the DapA family. In terms of assembly, homotetramer; dimer of dimers.

It is found in the cytoplasm. It catalyses the reaction L-aspartate 4-semialdehyde + pyruvate = (2S,4S)-4-hydroxy-2,3,4,5-tetrahydrodipicolinate + H2O + H(+). Its pathway is amino-acid biosynthesis; L-lysine biosynthesis via DAP pathway; (S)-tetrahydrodipicolinate from L-aspartate: step 3/4. In terms of biological role, catalyzes the condensation of (S)-aspartate-beta-semialdehyde [(S)-ASA] and pyruvate to 4-hydroxy-tetrahydrodipicolinate (HTPA). The chain is 4-hydroxy-tetrahydrodipicolinate synthase from Chlorobium chlorochromatii (strain CaD3).